Here is a 225-residue protein sequence, read N- to C-terminus: Protein-L-isoaspartate O-methyltransferase (225 aa).

Residue serine 75 is part of the active site.

Belongs to the methyltransferase superfamily. L-isoaspartyl/D-aspartyl protein methyltransferase family.

It is found in the cytoplasm. It catalyses the reaction [protein]-L-isoaspartate + S-adenosyl-L-methionine = [protein]-L-isoaspartate alpha-methyl ester + S-adenosyl-L-homocysteine. Functionally, catalyzes the methyl esterification of L-isoaspartyl residues in peptides and proteins that result from spontaneous decomposition of normal L-aspartyl and L-asparaginyl residues. It plays a role in the repair and/or degradation of damaged proteins. The protein is Protein-L-isoaspartate O-methyltransferase of Xylella fastidiosa (strain M23).